The chain runs to 246 residues: Large ribosomal subunit protein uL30-like 1 (246 aa).

Ser-54 is subject to Phosphoserine.

This sequence belongs to the universal ribosomal protein uL30 family.

In Mus musculus (Mouse), this protein is Large ribosomal subunit protein uL30-like 1 (Rpl7l1).